A 262-amino-acid polypeptide reads, in one-letter code: Protein BcsX (262 aa).

Its pathway is glycan metabolism; bacterial cellulose biosynthesis. The protein is Protein BcsX (bcsX) of Komagataeibacter xylinus (Gluconacetobacter xylinus).